The following is a 295-amino-acid chain: Putative xyloglucan endotransglucosylase/hydrolase protein 1 (295 aa).

Positions 1–24 (MNKMEYLSIFGFVSVLYLIIRVDA) are cleaved as a signal peptide. Residues 27–225 (YEVNGIDQSK…WSLAPFKANF (199 aa)) form the GH16 domain. E113 acts as the Nucleophile in catalysis. Catalysis depends on E117, which acts as the Proton donor. Xyloglucan contacts are provided by residues E117, 129–131 (QTN), and 139–141 (NRE). The N-linked (GlcNAc...) asparagine glycan is linked to N180. Residues 204 to 205 (NW) and G209 contribute to the xyloglucan site. N-linked (GlcNAc...) asparagine glycans are attached at residues N215 and N229. 2 disulfides stabilise this stretch: C233–C242 and C278–C291. R283 serves as a coordination point for xyloglucan.

It belongs to the glycosyl hydrolase 16 family. XTH group 1 subfamily. Contains at least one intrachain disulfide bond essential for its enzymatic activity.

Its subcellular location is the secreted. It localises to the cell wall. It is found in the extracellular space. The protein resides in the apoplast. The enzyme catalyses breaks a beta-(1-&gt;4) bond in the backbone of a xyloglucan and transfers the xyloglucanyl segment on to O-4 of the non-reducing terminal glucose residue of an acceptor, which can be a xyloglucan or an oligosaccharide of xyloglucan.. Its function is as follows. May catalyze xyloglucan endohydrolysis (XEH) and/or endotransglycosylation (XET). Cleaves and religates xyloglucan polymers, an essential constituent of the primary cell wall, and thereby participates in cell wall construction of growing tissues. In Arabidopsis thaliana (Mouse-ear cress), this protein is Putative xyloglucan endotransglucosylase/hydrolase protein 1 (XTH1).